Here is a 422-residue protein sequence, read N- to C-terminus: S-adenosylmethionine synthase (422 aa).

His15 is an ATP binding site. Residue Asp17 coordinates Mg(2+). Glu43 serves as a coordination point for K(+). The L-methionine site is built by Glu56 and Gln99. The interval 99-109 is flexible loop; that stretch reads QSPDISRGVTE. ATP-binding positions include 166-168, 232-233, Asp241, 247-248, Ala264, and Lys268; these read DGK, RF, and RK. Asp241 serves as a coordination point for L-methionine. An L-methionine-binding site is contributed by Lys272. The disordered stretch occupies residues 390-422; it reads AVPATTNGAGSKNGSGSKKEPKRKGKKETGAQA.

This sequence belongs to the AdoMet synthase family. Homotetramer; dimer of dimers. It depends on Mg(2+) as a cofactor. K(+) is required as a cofactor.

It is found in the cytoplasm. It catalyses the reaction L-methionine + ATP + H2O = S-adenosyl-L-methionine + phosphate + diphosphate. Its pathway is amino-acid biosynthesis; S-adenosyl-L-methionine biosynthesis; S-adenosyl-L-methionine from L-methionine: step 1/1. Catalyzes the formation of S-adenosylmethionine (AdoMet) from methionine and ATP. The overall synthetic reaction is composed of two sequential steps, AdoMet formation and the subsequent tripolyphosphate hydrolysis which occurs prior to release of AdoMet from the enzyme. The chain is S-adenosylmethionine synthase from Sorangium cellulosum (strain So ce56) (Polyangium cellulosum (strain So ce56)).